Reading from the N-terminus, the 304-residue chain is Bifunctional phosphoglucose/phosphomannose isomerase (304 aa).

The region spanning 16-147 (FDKSFKVGKY…KPKIGDVDEA (132 aa)) is the SIS domain. Residues glycine 35, serine 36, serine 74, serine 76, threonine 79, and arginine 122 each contribute to the D-fructose 6-phosphate site. Glutamate 196 functions as the Proton acceptor in the catalytic mechanism. D-fructose 6-phosphate-binding residues include histidine 212 and lysine 300. The Proton donor role is filled by histidine 212. Residue lysine 300 is the Proton acceptor of the active site.

Belongs to the PGI/PMI family. As to quaternary structure, homodimer.

The catalysed reaction is alpha-D-glucose 6-phosphate = beta-D-fructose 6-phosphate. It carries out the reaction D-mannose 6-phosphate = D-fructose 6-phosphate. In terms of biological role, dual specificity isomerase that catalyzes the isomerization of both glucose-6-phosphate and mannose-6-phosphate to fructose-6-phosphate. In Thermoplasma volcanium (strain ATCC 51530 / DSM 4299 / JCM 9571 / NBRC 15438 / GSS1), this protein is Bifunctional phosphoglucose/phosphomannose isomerase.